Consider the following 230-residue polypeptide: Urease accessory protein UreG (230 aa).

33–40 (GPVGSGKT) serves as a coordination point for GTP.

The protein belongs to the SIMIBI class G3E GTPase family. UreG subfamily. In terms of assembly, homodimer. UreD, UreF and UreG form a complex that acts as a GTP-hydrolysis-dependent molecular chaperone, activating the urease apoprotein by helping to assemble the nickel containing metallocenter of UreC. The UreE protein probably delivers the nickel.

The protein localises to the cytoplasm. In terms of biological role, facilitates the functional incorporation of the urease nickel metallocenter. This process requires GTP hydrolysis, probably effectuated by UreG. This Mycobacteroides abscessus (strain ATCC 19977 / DSM 44196 / CCUG 20993 / CIP 104536 / JCM 13569 / NCTC 13031 / TMC 1543 / L948) (Mycobacterium abscessus) protein is Urease accessory protein UreG.